A 204-amino-acid chain; its full sequence is Isochorismatase domain-containing protein 2 (204 aa).

It belongs to the isochorismatase family. In terms of assembly, interacts with CDKN2A.

The protein resides in the cytoplasm. Its subcellular location is the nucleus. This is Isochorismatase domain-containing protein 2 (ISOC2) from Bos taurus (Bovine).